Consider the following 309-residue polypeptide: NAD kinase (309 aa).

The active-site Proton acceptor is the aspartate 89. NAD(+) contacts are provided by residues 89 to 90 (DG), 163 to 164 (NE), histidine 174, arginine 191, aspartate 193, and 204 to 209 (TAYALS).

It belongs to the NAD kinase family. A divalent metal cation serves as cofactor.

The protein localises to the cytoplasm. It carries out the reaction NAD(+) + ATP = ADP + NADP(+) + H(+). Functionally, involved in the regulation of the intracellular balance of NAD and NADP, and is a key enzyme in the biosynthesis of NADP. Catalyzes specifically the phosphorylation on 2'-hydroxyl of the adenosine moiety of NAD to yield NADP. The polypeptide is NAD kinase (Shewanella baltica (strain OS185)).